Here is a 52-residue protein sequence, read N- to C-terminus: uncharacterized protein (52 aa).

This is an uncharacterized protein from Haemophilus influenzae (strain ATCC 51907 / DSM 11121 / KW20 / Rd).